A 1699-amino-acid chain; its full sequence is Hybrid signal transduction histidine kinase E (1699 aa).

Disordered stretches follow at residues 1–32 (MDKL…NLEN) and 58–97 (NNII…NPNV). A compositionally biased stretch (low complexity) spans 7 to 32 (NNNLSPPSSPSSSTTTPNLSSTNLEN). A run of 6 helical transmembrane segments spans residues 142 to 162 (CILL…LIFL), 164 to 184 (SFYP…IVST), 191 to 211 (LVAL…FLQI), 238 to 258 (LNFL…IFFP), 262 to 282 (FSIT…LISI), and 295 to 315 (NLIV…ILSI). The segment covering 412–432 (ITNGGNNKQTSTTSANSTPRY) has biased composition (polar residues). 2 disordered regions span residues 412–439 (ITNG…NNNN) and 542–593 (LLNN…NISN). Positions 544-593 (NNNNNNNNNNNNNNNNNNNNNNNNNNSNNNNNNNSNNNNNNNNINNNISN) are enriched in low complexity. One can recognise a Histidine kinase domain in the interval 678–950 (TVSHEVRTPI…AFSFTSILST (273 aa)). The residue at position 681 (histidine 681) is a Phosphohistidine; by autocatalysis. Disordered stretches follow at residues 819-866 (NNNN…NNNN), 1018-1054 (NNNN…NDNN), 1186-1239 (KKQQ…RKSS), 1252-1294 (MVQV…NPNN), and 1351-1406 (SIPI…SPPP). A compositionally biased stretch (polar residues) spans 1198-1212 (MGDTLSSTKSPQYTN). The span at 1219 to 1239 (SSSSNGSLNKSNRSNLLRKSS) shows a compositional bias: low complexity. A compositionally biased stretch (polar residues) spans 1271 to 1282 (KGNNSNPNSTEL). 2 stretches are compositionally biased toward low complexity: residues 1283-1294 (NSTNSVNGNPNN) and 1355-1392 (NINN…NNNN). In terms of domain architecture, Response regulatory spans 1575–1695 (NALIVDDTEL…TLKDTLLKWG (121 aa)). The residue at position 1625 (aspartate 1625) is a 4-aspartylphosphate.

It localises to the membrane. The enzyme catalyses ATP + protein L-histidine = ADP + protein N-phospho-L-histidine.. May act in a signal transduction pathway. This protein undergoes an ATP-dependent autophosphorylation at a conserved histidine residue in the kinase core, and a phosphoryl group is then transferred to a conserved aspartate residue in the receiver domain. The polypeptide is Hybrid signal transduction histidine kinase E (dhkE) (Dictyostelium discoideum (Social amoeba)).